The chain runs to 424 residues: Light-independent protochlorophyllide reductase subunit N (424 aa).

3 residues coordinate [4Fe-4S] cluster: Cys-27, Cys-52, and Cys-113.

Belongs to the BchN/ChlN family. In terms of assembly, protochlorophyllide reductase is composed of three subunits; BchL, BchN and BchB. Forms a heterotetramer of two BchB and two BchN subunits. The cofactor is [4Fe-4S] cluster.

It catalyses the reaction chlorophyllide a + oxidized 2[4Fe-4S]-[ferredoxin] + 2 ADP + 2 phosphate = protochlorophyllide a + reduced 2[4Fe-4S]-[ferredoxin] + 2 ATP + 2 H2O. It participates in porphyrin-containing compound metabolism; bacteriochlorophyll biosynthesis (light-independent). Component of the dark-operative protochlorophyllide reductase (DPOR) that uses Mg-ATP and reduced ferredoxin to reduce ring D of protochlorophyllide (Pchlide) to form chlorophyllide a (Chlide). This reaction is light-independent. The NB-protein (BchN-BchB) is the catalytic component of the complex. This is Light-independent protochlorophyllide reductase subunit N from Halorhodospira halophila (strain DSM 244 / SL1) (Ectothiorhodospira halophila (strain DSM 244 / SL1)).